A 37-amino-acid chain; its full sequence is Photosystem II reaction center protein L (37 aa).

At 1–13 (MEPNPNRQPVELN) the chain is on the cytoplasmic side. The chain crosses the membrane as a helical span at residues 14–35 (RTSLYLGLLLILVLALLFSSYF). Topologically, residues 36 to 37 (FN) are lumenal.

PSII is composed of 1 copy each of membrane proteins PsbA, PsbB, PsbC, PsbD, PsbE, PsbF, PsbH, PsbI, PsbJ, PsbK, PsbL, PsbM, PsbT, PsbX, PsbY, PsbZ, Psb30/Ycf12, peripheral proteins PsbO, CyanoQ (PsbQ), PsbU, PsbV and a large number of cofactors. It forms dimeric complexes. Part of a photosystem II (PSII) assembly intermediate complex PSII-I; crystallized from a strain deleted of psbJ, it forms monomeric PSII before addition of the oxygen evolving complex. PSII-I includes 3 assembly factors not found in mature PSII (Psb27, Psb28 and Psb34). Requires PSII binds multiple chlorophylls, carotenoids and specific lipids. as cofactor.

It is found in the cellular thylakoid membrane. Its function is as follows. One of the components of the core complex of photosystem II (PSII). PSII is a light-driven water:plastoquinone oxidoreductase that uses light energy to abstract electrons from H(2)O, generating O(2) and a proton gradient subsequently used for ATP formation. It consists of a core antenna complex that captures photons, and an electron transfer chain that converts photonic excitation into a charge separation. This subunit is found at the monomer-monomer interface and is required for correct PSII assembly and/or dimerization. This subunit may make specific contacts with lipid(s). This chain is Photosystem II reaction center protein L, found in Thermosynechococcus vestitus (strain NIES-2133 / IAM M-273 / BP-1).